We begin with the raw amino-acid sequence, 135 residues long: Large ribosomal subunit protein mL61 (135 aa).

The segment covering 114-129 has biased composition (basic and acidic residues); that stretch reads HHESSPENIKEAHKQD. Residues 114–135 form a disordered region; that stretch reads HHESSPENIKEAHKQDYSPPSN.

The protein belongs to the mitochondrion-specific ribosomal protein mL61 family. As to quaternary structure, component of the mitochondrial large ribosomal subunit (mt-LSU). Mature yeast 74S mitochondrial ribosomes consist of a small (37S) and a large (54S) subunit. The 37S small subunit contains a 15S ribosomal RNA (15S mt-rRNA) and at least 32 different proteins. The 54S large subunit contains a 21S rRNA (21S mt-rRNA) and at least 45 different proteins.

The protein localises to the mitochondrion. Functionally, component of the mitochondrial ribosome (mitoribosome), a dedicated translation machinery responsible for the synthesis of mitochondrial genome-encoded proteins, including at least some of the essential transmembrane subunits of the mitochondrial respiratory chain. The mitoribosomes are attached to the mitochondrial inner membrane and translation products are cotranslationally integrated into the membrane. mL61 is not essential in cells grown at 30 degrees Celsius but is required for mitochondrial translation in cells grown at 18 degrees Celsius. The protein is Large ribosomal subunit protein mL61 (mrp49) of Schizosaccharomyces pombe (strain 972 / ATCC 24843) (Fission yeast).